The following is a 227-amino-acid chain: MRLTPTERDRLLLFGAAELARARRARGLRLNVPEATALIADTVCEAARDGARLAQAIERARSVLGPDDVLPGVADVVTEVHVEAVFDDGSRLAVVADPVGGGGLGDDAPGALLPGHDRPEPEAALRLPVTNTATVPVSVTSHFHFFEANPRLDFDRGRAYGMRLAVPAGSSVRFGPGERVEVGLVPIGGARVAIGFAGLVDGPLDAPGAREEALRRAAACGYLGADR.

The urease gamma stretch occupies residues 1 to 101 (MRLTPTERDR…LAVVADPVGG (101 aa)). The tract at residues 102–227 (GGLGDDAPGA…AACGYLGADR (126 aa)) is urease beta.

This sequence in the N-terminal section; belongs to the urease gamma subunit family. In the C-terminal section; belongs to the urease beta subunit family. In terms of assembly, heterohexamer of 3 UreC (alpha) and 3 UreAB (gamma/beta) subunits.

It is found in the cytoplasm. The catalysed reaction is urea + 2 H2O + H(+) = hydrogencarbonate + 2 NH4(+). Its pathway is nitrogen metabolism; urea degradation; CO(2) and NH(3) from urea (urease route): step 1/1. The sequence is that of Urease subunit gamma/beta from Streptomyces coelicolor (strain ATCC BAA-471 / A3(2) / M145).